A 704-amino-acid polypeptide reads, in one-letter code: Non-sulfated chondroitin lyase E66 (704 aa).

A signal peptide spans 1–23; it reads MSIVLIIVIVVIFLICFLYLSNS. Residues N236 and H291 each act as proton acceptor in the active site. The active-site Proton donor is the Y299.

It belongs to the baculoviridae E66 family.

It localises to the virion membrane. Its subcellular location is the host nucleus. The protein localises to the host cytoplasm. In terms of biological role, component of the polyhedra envelope. Plays an essential role in oral infectivity. May digest, with its chondroitin lyase activity, the chondroitin sulfate barrier of the peritrophic matrix of the host midgut to facilitate viral infection in the epithelial cells. This Lepidoptera (butterflies and moths) protein is Non-sulfated chondroitin lyase E66 (P79).